We begin with the raw amino-acid sequence, 144 residues long: Large ribosomal subunit protein uL14 (144 aa).

This sequence belongs to the universal ribosomal protein uL14 family. In terms of assembly, part of the 50S ribosomal subunit. Forms a cluster with proteins L3 and L24e, part of which may contact the 16S rRNA in 2 intersubunit bridges.

Its function is as follows. Binds to 23S rRNA. Forms part of two intersubunit bridges in the 70S ribosome. This is Large ribosomal subunit protein uL14 from Pyrobaculum islandicum (strain DSM 4184 / JCM 9189 / GEO3).